The chain runs to 138 residues: Probable DNA-directed RNA polymerases I, II, and III subunit RPABC2 (138 aa).

Acidic residues-rich tracts occupy residues 1–27 (MADDDDYQDMDNDDFVDDNEMEDVIEE) and 35–46 (EEEDDDNNVDEN). The disordered stretch occupies residues 1–46 (MADDDDYQDMDNDDFVDDNEMEDVIEEEQQRPDHEEEDDDNNVDEN).

Belongs to the archaeal Rpo6/eukaryotic RPB6 RNA polymerase subunit family. Component of the RNA polymerase I (Pol I), RNA polymerase II (Pol II) and RNA polymerase III (Pol III) complexes consisting of at least 13, 12 and 17 subunits, respectively.

The protein localises to the nucleus. Its function is as follows. DNA-dependent RNA polymerases catalyze the transcription of DNA into RNA using the four ribonucleoside triphosphates as substrates. Common component of RNA polymerases I, II and III which synthesize ribosomal RNA precursors, mRNA precursors and many functional non-coding RNAs, and small RNAs, such as 5S rRNA and tRNAs, respectively. Pol II is the central component of the basal RNA polymerase II transcription machinery. Pols are composed of mobile elements that move relative to each other. In Pol II, RPB6 is part of the clamp element and together with parts of RPB1 and RPB2 forms a pocket to which the RPB4-RPB7 subcomplex binds. This is Probable DNA-directed RNA polymerases I, II, and III subunit RPABC2 from Caenorhabditis briggsae.